Reading from the N-terminus, the 191-residue chain is MLLSDKDIRAEIDNGRVRIDPFDDSMVQPSSIDVRLDRYFRVFENHRYPHIDPSVEQVDLTRLVEPEGDEPFILHPGEFVLASTYEVVSLPDDLASRLEGKSSLGRLGLVTHSTAGFIDPGFSGHVTLELSNLATLPIKLWPGMKIGQLCLFRLTSPAEHPYGSERYGSRYQGQRGPTASRSFLNFHRTQV.

DCTP is bound by residues 101–106 (KSSLGR), aspartate 119, 127–129 (TLE), glutamine 148, tyrosine 162, and glutamine 174. The active-site Proton donor/acceptor is the glutamate 129.

Belongs to the dCTP deaminase family. In terms of assembly, homotrimer.

The enzyme catalyses dCTP + 2 H2O = dUMP + NH4(+) + diphosphate. Its pathway is pyrimidine metabolism; dUMP biosynthesis; dUMP from dCTP: step 1/1. Bifunctional enzyme that catalyzes both the deamination of dCTP to dUTP and the hydrolysis of dUTP to dUMP without releasing the toxic dUTP intermediate. In Streptomyces coelicolor (strain ATCC BAA-471 / A3(2) / M145), this protein is dCTP deaminase, dUMP-forming.